The chain runs to 35 residues: uncharacterized protein (35 aa).

The chain crosses the membrane as a helical span at residues 10-30; sequence LMITASFFAIFIIIVVSVLLL.

Its subcellular location is the membrane. This is an uncharacterized protein from Salmonella paratyphi A (strain ATCC 9150 / SARB42).